The primary structure comprises 359 residues: Beta-1,3-galactosyltransferase bre-2 (359 aa).

The Cytoplasmic portion of the chain corresponds to 1–11 (MRQSRRASSRV). A helical; Signal-anchor for type II membrane protein membrane pass occupies residues 12 to 29 (NRLVVIFIIVASGFLLLY). The Lumenal portion of the chain corresponds to 30–359 (KNTQQFTQID…NPDLEELKEK (330 aa)). Asn-73, Asn-163, and Asn-209 each carry an N-linked (GlcNAc...) asparagine glycan.

The protein belongs to the glycosyltransferase 31 family.

It is found in the golgi apparatus membrane. It participates in protein modification; protein glycosylation. Transfers N-acetylgalactosamine onto carbohydrate substrates. Involved in susceptibility to pore-forming crystal toxins in conjunction with bre-1, bre-3, bre-4, and bre-5. Involved in resistance to the nematotoxic C.cinerea galectin Cgl2. In Caenorhabditis elegans, this protein is Beta-1,3-galactosyltransferase bre-2.